A 313-amino-acid polypeptide reads, in one-letter code: T-box protein 37 (313 aa).

The T-box DNA-binding region spans 19–195; that stretch reads IWEKFYPKTE…HNKFASGFRS (177 aa). Positions 193 to 228 are disordered; that stretch reads FRSNGKRRLSSESENSENSPPKRSASAISSLTPPAI.

Its subcellular location is the nucleus. In terms of biological role, transcription factor. Required for mesodermal induction, acting redundantly with transcription factor tbx-38. Together with tbx-38, acts by inducing cell fates in the AB lineage, thereby playing a role in development of the anterior pharynx. This is T-box protein 37 (tbx-37) from Caenorhabditis elegans.